A 419-amino-acid polypeptide reads, in one-letter code: Tyrosine--tRNA ligase (419 aa).

L-tyrosine is bound at residue Tyr42. The 'HIGH' region signature appears at Ala47 to Ser56. L-tyrosine is bound by residues Tyr179 and Gln183. A 'KMSKS' region motif is present at residues Lys239 to Thr243. Lys242 is a binding site for ATP. The S4 RNA-binding domain occupies Val353–Pro418.

Belongs to the class-I aminoacyl-tRNA synthetase family. TyrS type 1 subfamily. In terms of assembly, homodimer.

The protein resides in the cytoplasm. The catalysed reaction is tRNA(Tyr) + L-tyrosine + ATP = L-tyrosyl-tRNA(Tyr) + AMP + diphosphate + H(+). Catalyzes the attachment of tyrosine to tRNA(Tyr) in a two-step reaction: tyrosine is first activated by ATP to form Tyr-AMP and then transferred to the acceptor end of tRNA(Tyr). The protein is Tyrosine--tRNA ligase of Caulobacter vibrioides (strain ATCC 19089 / CIP 103742 / CB 15) (Caulobacter crescentus).